A 259-amino-acid polypeptide reads, in one-letter code: L-cystine import ATP-binding protein TcyN (259 aa).

The ABC transporter domain occupies 2 to 239 (IEIKNIHKQF…TKKDRTRQFL (238 aa)). 34 to 41 (GPSGSGKT) is a binding site for ATP.

It belongs to the ABC transporter superfamily. L-cystine importer (TC 3.A.1.3.13) family. As to quaternary structure, the complex is composed of two ATP-binding proteins (TcyN), two transmembrane proteins (TcyL and TcyM) and two solute-binding proteins (TcyJ and TcyK).

It is found in the cell membrane. Functionally, part of the ABC transporter complex TcyJKLMN involved in L-cystine import. Responsible for energy coupling to the transport system. Is also involved in cystathionine, djenkolate, and S-methylcysteine transport. This Bacillus subtilis (strain 168) protein is L-cystine import ATP-binding protein TcyN (tcyN).